A 130-amino-acid chain; its full sequence is Secreted cysteine-rich effector 2 (130 aa).

Positions 1–23 (MLINAARLLLPAAALVHLSLAWA) are cleaved as a signal peptide. A plant immunity suppression domain region spans residues 68-85 (LKNGEDWCKHCASPRVSV).

The protein resides in the secreted. It is found in the host cell. Its subcellular location is the host periplasm. Secreted effector required for full virulence of U.virens. Inhibits host pathogen-associated molecular pattern-triggered immunity including flg22- and chitin-induced defense gene expression and oxidative burst. The protein is Secreted cysteine-rich effector 2 of Ustilaginoidea virens (Rice false smut fungus).